Here is a 123-residue protein sequence, read N- to C-terminus: Ribonuclease P protein component (123 aa).

This sequence belongs to the RnpA family. Consists of a catalytic RNA component (M1 or rnpB) and a protein subunit.

It catalyses the reaction Endonucleolytic cleavage of RNA, removing 5'-extranucleotides from tRNA precursor.. Its function is as follows. RNaseP catalyzes the removal of the 5'-leader sequence from pre-tRNA to produce the mature 5'-terminus. It can also cleave other RNA substrates such as 4.5S RNA. The protein component plays an auxiliary but essential role in vivo by binding to the 5'-leader sequence and broadening the substrate specificity of the ribozyme. The protein is Ribonuclease P protein component of Streptomyces avermitilis (strain ATCC 31267 / DSM 46492 / JCM 5070 / NBRC 14893 / NCIMB 12804 / NRRL 8165 / MA-4680).